A 136-amino-acid polypeptide reads, in one-letter code: Large-conductance mechanosensitive channel (136 aa).

2 helical membrane passes run 10-30 (FAMRGNVVDLAVGVIIGAAFG) and 76-96 (GVFIQNVFDFLIVAFAIFMAI).

The protein belongs to the MscL family. Homopentamer.

The protein resides in the cell inner membrane. In terms of biological role, channel that opens in response to stretch forces in the membrane lipid bilayer. May participate in the regulation of osmotic pressure changes within the cell. The polypeptide is Large-conductance mechanosensitive channel (Escherichia coli O127:H6 (strain E2348/69 / EPEC)).